The sequence spans 95 residues: Small ribosomal subunit protein uS17 (95 aa).

It belongs to the universal ribosomal protein uS17 family. Part of the 30S ribosomal subunit.

Functionally, one of the primary rRNA binding proteins, it binds specifically to the 5'-end of 16S ribosomal RNA. In Mesomycoplasma hyopneumoniae (strain 7448) (Mycoplasma hyopneumoniae), this protein is Small ribosomal subunit protein uS17.